A 100-amino-acid chain; its full sequence is Integration host factor subunit alpha (100 aa).

The protein belongs to the bacterial histone-like protein family. In terms of assembly, heterodimer of an alpha and a beta chain.

Its function is as follows. This protein is one of the two subunits of integration host factor, a specific DNA-binding protein that functions in genetic recombination as well as in transcriptional and translational control. This is Integration host factor subunit alpha from Methylobacillus flagellatus (strain ATCC 51484 / DSM 6875 / VKM B-1610 / KT).